Consider the following 183-residue polypeptide: tRNA-splicing endonuclease (183 aa).

Active-site residues include tyrosine 120, histidine 128, and lysine 159.

The protein belongs to the tRNA-intron endonuclease family. Archaeal short subfamily. Homotetramer; although the tetramer contains four active sites, only two participate in the cleavage. Therefore, it should be considered as a dimer of dimers.

The catalysed reaction is pretRNA = a 3'-half-tRNA molecule with a 5'-OH end + a 5'-half-tRNA molecule with a 2',3'-cyclic phosphate end + an intron with a 2',3'-cyclic phosphate and a 5'-hydroxyl terminus.. In terms of biological role, endonuclease that removes tRNA introns. Cleaves pre-tRNA at the 5'- and 3'-splice sites to release the intron. The products are an intron and two tRNA half-molecules bearing 2',3' cyclic phosphate and 5'-OH termini. Recognizes a pseudosymmetric substrate in which 2 bulged loops of 3 bases are separated by a stem of 4 bp. The sequence is that of tRNA-splicing endonuclease from Pyrobaculum islandicum (strain DSM 4184 / JCM 9189 / GEO3).